Consider the following 310-residue polypeptide: MKLVFAGTPEVAVPALDALIASGRHEVAAVVTRPDAPAGRGRRLVASPVAERAEEAGIEVLKPAKPRDPDFLERLREIAPDCCPVVAYGALLPRVALDVPARGWVNLHFSLLPAWRGAAPVQHALMAGDEITGASTFLIEEGLDSGPVYGTVTETVRPTDTSGDLLTRLAFAGAGLLAATMDGIEDGSLEAVPQPAEGVTLAPKITVEDARVDWTAPALRVDRVVRGCTPAPGAWTTFRGERLKLVQAVPLPDRSDLAPGQLAAGKNNVYVGTGSHAVELLWVQAQGKKPMRAADWARGARITEGERVGD.

110-113 is a (6S)-5,6,7,8-tetrahydrofolate binding site; the sequence is SLLP.

Belongs to the Fmt family.

The catalysed reaction is L-methionyl-tRNA(fMet) + (6R)-10-formyltetrahydrofolate = N-formyl-L-methionyl-tRNA(fMet) + (6S)-5,6,7,8-tetrahydrofolate + H(+). In terms of biological role, attaches a formyl group to the free amino group of methionyl-tRNA(fMet). The formyl group appears to play a dual role in the initiator identity of N-formylmethionyl-tRNA by promoting its recognition by IF2 and preventing the misappropriation of this tRNA by the elongation apparatus. The sequence is that of Methionyl-tRNA formyltransferase from Streptomyces coelicolor (strain ATCC BAA-471 / A3(2) / M145).